We begin with the raw amino-acid sequence, 427 residues long: ATP-sensitive inward rectifier potassium channel 12 (427 aa).

Over 1–77 the chain is Cytoplasmic; sequence MTAASRANPY…LADMFTTCVD (77 aa). Residue Cys75 is modified to S-nitrosocysteine. Residues 78-104 form a helical membrane-spanning segment; it reads IRWRYMLLIFSLAFLASWLLFGIIFWV. 2 residues coordinate a 1,2-diacyl-sn-glycero-3-phospho-(1D-myo-inositol-4,5-bisphosphate): Arg79 and Arg81. The Extracellular segment spans residues 105–129; it reads IAVAHGDLEPAEGRGRTPCVLQVHG. Residues Cys123 and Cys155 are joined by a disulfide bond. The helical; Pore-forming intramembrane region spans 130-146; the sequence is FMAAFLFSIETQTTIGY. Thr143, Ile144, Gly145, and Tyr146 together coordinate K(+). The Selectivity filter signature appears at 143–148; that stretch reads TIGYGL. Residues 147–155 are Extracellular-facing; sequence GLRCVTEEC. Residues 156-183 traverse the membrane as a helical segment; that stretch reads PVAVFMVVAQSIVGCIIDSFMIGAIMAK. A 1,2-diacyl-sn-glycero-3-phospho-(1D-myo-inositol-4,5-bisphosphate)-binding residues include Lys183 and Lys188. Over 184 to 427 the chain is Cytoplasmic; sequence MARPKKRAQT…ERPYRRESEI (244 aa). The tract at residues 387 to 427 is disordered; the sequence is DEEDEVATDRDGRSPQPEHDFDRLQASSAALERPYRRESEI. Residues 393-409 show a composition bias toward basic and acidic residues; sequence ATDRDGRSPQPEHDFDR. The PDZ-binding signature appears at 425 to 427; it reads SEI.

Belongs to the inward rectifier-type potassium channel (TC 1.A.2.1) family. KCNJ12 subfamily. Homotetramer. Forms heteromer with KCNJ4. Can form heteromeric channels with Kir2.6/KCNJ18. Association, via its PDZ-recognition domain, with LIN7A, LIN7B, LIN7C, DLG1, CASK and APBA1 plays a key role in its localization and trafficking. As to expression, highest level in cerebellum.

It is found in the membrane. The protein resides in the cell membrane. Its subcellular location is the sarcolemma. The protein localises to the T-tubule. The enzyme catalyses K(+)(in) = K(+)(out). With respect to regulation, activated by phosphatidylinositol 4,5-biphosphate (PtdIns(4,5)P2). PtdIns(4,5)P2 binding to the cytoplasmic side of the channel triggers a conformation change leading to channel opening. Inhibited by Ba(2+). In terms of biological role, inward rectifying potassium channel that probably participates in controlling the resting membrane potential in electrically excitable cells. It probably participates in establishing action potential waveform and excitability of neuronal and muscle tissues. Inward rectifier potassium channels are characterized by a greater tendency to allow potassium to flow into the cell rather than out of it. Their voltage dependence is regulated by the concentration of extracellular potassium; as external potassium is raised, the voltage range of the channel opening shifts to more positive voltages. The inward rectification is mainly due to the blockage of outward current by internal magnesium. This is ATP-sensitive inward rectifier potassium channel 12 (Kcnj12) from Mus musculus (Mouse).